A 1026-amino-acid chain; its full sequence is Isoleucine--tRNA ligase (1026 aa).

Residues 51-61 (PTANGRPHIGH) carry the 'HIGH' region motif. The short motif at 591 to 595 (KMSKS) is the 'KMSKS' region element. An ATP-binding site is contributed by K594.

This sequence belongs to the class-I aminoacyl-tRNA synthetase family. IleS type 2 subfamily. As to quaternary structure, monomer. Zn(2+) is required as a cofactor.

The protein resides in the cytoplasm. The enzyme catalyses tRNA(Ile) + L-isoleucine + ATP = L-isoleucyl-tRNA(Ile) + AMP + diphosphate. Its function is as follows. Catalyzes the attachment of isoleucine to tRNA(Ile). As IleRS can inadvertently accommodate and process structurally similar amino acids such as valine, to avoid such errors it has two additional distinct tRNA(Ile)-dependent editing activities. One activity is designated as 'pretransfer' editing and involves the hydrolysis of activated Val-AMP. The other activity is designated 'posttransfer' editing and involves deacylation of mischarged Val-tRNA(Ile). The chain is Isoleucine--tRNA ligase from Thermoplasma acidophilum (strain ATCC 25905 / DSM 1728 / JCM 9062 / NBRC 15155 / AMRC-C165).